The primary structure comprises 365 residues: Cobalt-precorrin-5B C(1)-methyltransferase (365 aa).

This sequence belongs to the CbiD family.

The enzyme catalyses Co-precorrin-5B + S-adenosyl-L-methionine = Co-precorrin-6A + S-adenosyl-L-homocysteine. Its pathway is cofactor biosynthesis; adenosylcobalamin biosynthesis; cob(II)yrinate a,c-diamide from sirohydrochlorin (anaerobic route): step 6/10. Catalyzes the methylation of C-1 in cobalt-precorrin-5B to form cobalt-precorrin-6A. The protein is Cobalt-precorrin-5B C(1)-methyltransferase of Clostridium perfringens (strain SM101 / Type A).